The following is a 293-amino-acid chain: Ribosomal protein L11 methyltransferase (293 aa).

Positions 145, 166, 188, and 230 each coordinate S-adenosyl-L-methionine.

The protein belongs to the methyltransferase superfamily. PrmA family.

It localises to the cytoplasm. It carries out the reaction L-lysyl-[protein] + 3 S-adenosyl-L-methionine = N(6),N(6),N(6)-trimethyl-L-lysyl-[protein] + 3 S-adenosyl-L-homocysteine + 3 H(+). Functionally, methylates ribosomal protein L11. The chain is Ribosomal protein L11 methyltransferase from Shewanella piezotolerans (strain WP3 / JCM 13877).